We begin with the raw amino-acid sequence, 366 residues long: S-adenosylmethionine:tRNA ribosyltransferase-isomerase (366 aa).

The protein belongs to the QueA family. As to quaternary structure, monomer.

The protein resides in the cytoplasm. The catalysed reaction is 7-aminomethyl-7-carbaguanosine(34) in tRNA + S-adenosyl-L-methionine = epoxyqueuosine(34) in tRNA + adenine + L-methionine + 2 H(+). The protein operates within tRNA modification; tRNA-queuosine biosynthesis. Its function is as follows. Transfers and isomerizes the ribose moiety from AdoMet to the 7-aminomethyl group of 7-deazaguanine (preQ1-tRNA) to give epoxyqueuosine (oQ-tRNA). The protein is S-adenosylmethionine:tRNA ribosyltransferase-isomerase of Methylorubrum populi (strain ATCC BAA-705 / NCIMB 13946 / BJ001) (Methylobacterium populi).